The primary structure comprises 474 residues: Sugar transporter ERD6-like 17 (474 aa).

Transmembrane regions (helical) follow at residues 27 to 47, 76 to 96, 106 to 126, 129 to 149, 159 to 180, 184 to 204, 266 to 286, 302 to 322, 329 to 349, 363 to 383, 403 to 423, and 429 to 449; these read ITACVILSTFVAVCGSFSFGV, FATLGAAIGALFCGNLAMVIG, FLCITGWLSIAFAKEVVLLNF, IISGIGFGLTSYVVPVYIAEI, TFSNQLLQNAGLAMIYFCGNFI, TLALLGALPCFIQVIGLFFVP, TLVVGIGLMLIQQFSGSAAVI, IGTTMLGIFVIPKAMIGLILV, PLLMTSAFGMSMTCMLLGVAF, ILSFICVMMYIATYAIGLGGL, IVTLVSFSSSSIVTYAFNFLF, and GTFFIFAGIGGAALLFIWLLV.

Belongs to the major facilitator superfamily. Sugar transporter (TC 2.A.1.1) family. In terms of tissue distribution, expressed in young seedlings.

It is found in the membrane. In terms of biological role, sugar transporter. The protein is Sugar transporter ERD6-like 17 of Arabidopsis thaliana (Mouse-ear cress).